A 428-amino-acid polypeptide reads, in one-letter code: tRNA modification GTPase MnmE (428 aa).

3 residues coordinate (6S)-5-formyl-5,6,7,8-tetrahydrofolate: Arg20, Glu76, and Arg116. One can recognise a TrmE-type G domain in the interval 212–351 (GFEVAIVGAP…LVAAIGERLL (140 aa)). Asn222 provides a ligand contact to K(+). GTP is bound by residues 222-227 (NAGKST), 241-247 (SEIAGTT), and 266-269 (DTAG). Residue Ser226 participates in Mg(2+) binding. Positions 241, 243, and 246 each coordinate K(+). Thr247 contributes to the Mg(2+) binding site. Position 428 (Lys428) interacts with (6S)-5-formyl-5,6,7,8-tetrahydrofolate.

Belongs to the TRAFAC class TrmE-Era-EngA-EngB-Septin-like GTPase superfamily. TrmE GTPase family. In terms of assembly, homodimer. Heterotetramer of two MnmE and two MnmG subunits. K(+) serves as cofactor.

The protein resides in the cytoplasm. Functionally, exhibits a very high intrinsic GTPase hydrolysis rate. Involved in the addition of a carboxymethylaminomethyl (cmnm) group at the wobble position (U34) of certain tRNAs, forming tRNA-cmnm(5)s(2)U34. In Cereibacter sphaeroides (strain ATCC 17029 / ATH 2.4.9) (Rhodobacter sphaeroides), this protein is tRNA modification GTPase MnmE.